The sequence spans 89 residues: Long neurotoxin homolog TA-bm16 (89 aa).

An N-terminal signal peptide occupies residues 1–21; it reads MKTLLLTLVVVTIVCLDLGYT. Cystine bridges form between Cys-24-Cys-45, Cys-27-Cys-32, Cys-38-Cys-66, Cys-70-Cys-81, and Cys-82-Cys-87.

It belongs to the three-finger toxin family. Ancestral subfamily. Orphan group V sub-subfamily. In terms of tissue distribution, expressed by the venom gland.

The protein localises to the secreted. Functionally, exhibits M2 muscarinic acetylcholine receptor (CHRM2)-blocking activity, but has a weak binding activity toward nicotinic AChR. Moreover, it inhibits collagen-induced platelet aggregation. The protein is Long neurotoxin homolog TA-bm16 of Bungarus multicinctus (Many-banded krait).